We begin with the raw amino-acid sequence, 564 residues long: Arginine--tRNA ligase (564 aa).

A 'HIGH' region motif is present at residues 136–146; that stretch reads ANPTGPLHMGN.

The protein belongs to the class-I aminoacyl-tRNA synthetase family. Monomer.

Its subcellular location is the cytoplasm. It catalyses the reaction tRNA(Arg) + L-arginine + ATP = L-arginyl-tRNA(Arg) + AMP + diphosphate. The sequence is that of Arginine--tRNA ligase from Acetivibrio thermocellus (strain ATCC 27405 / DSM 1237 / JCM 9322 / NBRC 103400 / NCIMB 10682 / NRRL B-4536 / VPI 7372) (Clostridium thermocellum).